Here is a 407-residue protein sequence, read N- to C-terminus: Imidazolonepropionase (407 aa).

Fe(3+) is bound by residues His68 and His70. 2 residues coordinate Zn(2+): His68 and His70. Arg77, Tyr140, and His173 together coordinate 4-imidazolone-5-propanoate. Tyr140 contributes to the N-formimidoyl-L-glutamate binding site. His238 serves as a coordination point for Fe(3+). His238 is a Zn(2+) binding site. Gln241 serves as a coordination point for 4-imidazolone-5-propanoate. Asp313 serves as a coordination point for Fe(3+). Residue Asp313 participates in Zn(2+) binding. Residues Asn315 and Gly317 each coordinate N-formimidoyl-L-glutamate. A 4-imidazolone-5-propanoate-binding site is contributed by Thr318.

Belongs to the metallo-dependent hydrolases superfamily. HutI family. It depends on Zn(2+) as a cofactor. Fe(3+) serves as cofactor.

It is found in the cytoplasm. It catalyses the reaction 4-imidazolone-5-propanoate + H2O = N-formimidoyl-L-glutamate. The protein operates within amino-acid degradation; L-histidine degradation into L-glutamate; N-formimidoyl-L-glutamate from L-histidine: step 3/3. Its function is as follows. Catalyzes the hydrolytic cleavage of the carbon-nitrogen bond in imidazolone-5-propanoate to yield N-formimidoyl-L-glutamate. It is the third step in the universal histidine degradation pathway. In Burkholderia cenocepacia (strain HI2424), this protein is Imidazolonepropionase.